Here is a 193-residue protein sequence, read N- to C-terminus: MNRSDKITLDQIKKLVPINADLINFAADVKVSAATDNPFLMAVVSQDMLESTTELPYKSIQKQVSLTVRNDNNVYQPYVLVLKSDFPQEAIVTINLQETPLVTASGCGRQTTIYPPALNGNGNGNGNGVVAPAYVSAVGGAPTDDTTQWYKDWRYWAVIALIAAVLIYLYMKSKKGSGEEQPVVIEMSRYSNA.

Residues 153–170 (WRYWAVIALIAAVLIYLY) traverse the membrane as a helical segment.

The protein resides in the membrane. This is an uncharacterized protein from Invertebrate iridescent virus 6 (IIV-6).